A 523-amino-acid polypeptide reads, in one-letter code: 2-isopropylmalate synthase (523 aa).

Residues 5–267 (VIIFDTTLRD…ETGINAKEIH (263 aa)) form the Pyruvate carboxyltransferase domain. Mn(2+)-binding residues include D14, H202, H204, and N238. Residues 392-523 (KLQQLVVHSD…QQNKRELGGV (132 aa)) are regulatory domain.

It belongs to the alpha-IPM synthase/homocitrate synthase family. LeuA type 1 subfamily. In terms of assembly, homodimer. Requires Mn(2+) as cofactor.

It is found in the cytoplasm. It carries out the reaction 3-methyl-2-oxobutanoate + acetyl-CoA + H2O = (2S)-2-isopropylmalate + CoA + H(+). Its pathway is amino-acid biosynthesis; L-leucine biosynthesis; L-leucine from 3-methyl-2-oxobutanoate: step 1/4. In terms of biological role, catalyzes the condensation of the acetyl group of acetyl-CoA with 3-methyl-2-oxobutanoate (2-ketoisovalerate) to form 3-carboxy-3-hydroxy-4-methylpentanoate (2-isopropylmalate). In Shewanella pealeana (strain ATCC 700345 / ANG-SQ1), this protein is 2-isopropylmalate synthase.